The following is a 428-amino-acid chain: Involucrin (428 aa).

Disordered regions lie at residues 1 to 128 (MSQQ…EEKK) and 140 to 398 (KRDD…GQAQ). Residues 56 to 76 (PSKHEEKHVTIVKGVPEHECE) are compositionally biased toward basic and acidic residues. A compositionally biased stretch (low complexity) spans 77 to 92 (QQQQAQGQERQQQHWG). Basic and acidic residues-rich tracts occupy residues 107–117 (LKQEEAQREKQ), 162–174 (QLKH…KPLE), and 192–208 (QLKH…HLEQ). The span at 209 to 218 (QEGQLELPEQ) shows a compositional bias: low complexity. A compositionally biased stretch (basic and acidic residues) spans 220 to 297 (DQPKHLEQLE…CEGQLEHLEQ (78 aa)). The segment covering 298–311 (QEGQLELPEQQVGQ) has biased composition (low complexity). Basic and acidic residues-rich tracts occupy residues 313-327 (KHLE…HPEQ), 352-366 (KHLE…HPEQ), and 374-385 (QLKDLEQQERQL).

It belongs to the involucrin family. In terms of assembly, directly or indirectly cross-linked to cornifelin (CNFN). In terms of processing, substrate of transglutaminase. Specific glutamines or lysines are cross-linked to keratins, desmoplakin and to inter involucrin molecules. In terms of tissue distribution, keratinocytes of epidermis and other stratified squamous epithelia.

It is found in the cytoplasm. Its function is as follows. Part of the insoluble cornified cell envelope (CE) of stratified squamous epithelia. In Cebus albifrons (White-fronted capuchin), this protein is Involucrin (IVL).